The sequence spans 574 residues: Putative ABC transporter ATP-binding protein VVA0347 (574 aa).

ABC transporter domains are found at residues 3 to 244 (IEFS…GIRE) and 299 to 533 (LDVR…ANLT). ATP-binding positions include 37 to 44 (GPSGSGKS) and 332 to 339 (GKNGSGKS).

Belongs to the ABC transporter superfamily.

The protein resides in the cell inner membrane. In terms of biological role, probably part of an ABC transporter complex. Responsible for energy coupling to the transport system. The sequence is that of Putative ABC transporter ATP-binding protein VVA0347 from Vibrio vulnificus (strain YJ016).